Consider the following 210-residue polypeptide: RNA chaperone ProQ (210 aa).

Positions 98-127 (HAKASLEESKAKVAARRKEQAKKAREEAKA) are enriched in basic and acidic residues. The segment at 98 to 155 (HAKASLEESKAKVAARRKEQAKKAREEAKAKKPARATTPPKRRPQPAAVAKKQEKPVE) is disordered.

Belongs to the ProQ family.

The protein localises to the cytoplasm. Its function is as follows. RNA chaperone with significant RNA binding, RNA strand exchange and RNA duplexing activities. This is RNA chaperone ProQ from Aliivibrio salmonicida (strain LFI1238) (Vibrio salmonicida (strain LFI1238)).